The primary structure comprises 431 residues: Cyclic 2,3-diphosphoglycerate synthetase (431 aa).

The protein belongs to the cyclic 2,3-diphosphoglycerate synthetase family.

The protein resides in the cytoplasm. It catalyses the reaction (2R)-2,3-bisphosphoglycerate + ATP + H(+) = cyclic (2R)-2,3-bisphosphoglycerate + ADP + phosphate. In terms of biological role, catalyzes the formation of cyclic 2,3-diphosphoglycerate (cDPG) by formation of an intramolecular phosphoanhydride bond at the expense of ATP. This Pyrococcus furiosus (strain ATCC 43587 / DSM 3638 / JCM 8422 / Vc1) protein is Cyclic 2,3-diphosphoglycerate synthetase.